The sequence spans 206 residues: Ribosomal RNA large subunit methyltransferase E (206 aa).

S-adenosyl-L-methionine contacts are provided by glycine 60, tryptophan 62, aspartate 80, aspartate 96, and aspartate 121. The active-site Proton acceptor is the lysine 161.

This sequence belongs to the class I-like SAM-binding methyltransferase superfamily. RNA methyltransferase RlmE family.

It is found in the cytoplasm. It catalyses the reaction uridine(2552) in 23S rRNA + S-adenosyl-L-methionine = 2'-O-methyluridine(2552) in 23S rRNA + S-adenosyl-L-homocysteine + H(+). Functionally, specifically methylates the uridine in position 2552 of 23S rRNA at the 2'-O position of the ribose in the fully assembled 50S ribosomal subunit. This Legionella pneumophila (strain Paris) protein is Ribosomal RNA large subunit methyltransferase E.